A 631-amino-acid polypeptide reads, in one-letter code: Squalene--hopene cyclase (631 aa).

PFTB repeat units lie at residues 15-56, 61-102, and 241-282; these read LDRA…LDRV, MEKI…KYIG, and EIRA…QHPA. Aspartate 376 acts as the Proton donor in catalysis. PFTB repeat units follow at residues 400–441, 468–508, 516–557, and 574–622; these read MTKG…GEVT, IRRA…KAVG, IQKA…SQTA, and ARRG…LALG.

Belongs to the terpene cyclase/mutase family. In terms of assembly, homodimer.

The protein localises to the cell membrane. The enzyme catalyses squalene = hop-22(29)-ene. It carries out the reaction squalene + H2O = hopan-22-ol. It functions in the pathway secondary metabolite biosynthesis; hopanoid biosynthesis. In terms of biological role, catalyzes the cyclization of squalene to two pentacyclic triterpenes, hop-22(29)-ene and hopan-22-ol (diplopterol); hopene and hopanol are formed at a constant ratio of 5:1. Is a key enzyme of hopanoid biosynthesis; hopanoids are components of the bacterial cytoplasmic membranes that play a vital role in stabilizing the membranes. In Alicyclobacillus acidocaldarius subsp. acidocaldarius (strain ATCC 27009 / DSM 446 / BCRC 14685 / JCM 5260 / KCTC 1825 / NBRC 15652 / NCIMB 11725 / NRRL B-14509 / 104-IA) (Bacillus acidocaldarius), this protein is Squalene--hopene cyclase (shc).